The following is a 66-amino-acid chain: M-poneratoxin-Dq3a (66 aa).

The first 23 residues, 1 to 23 (MKLSALSIIFGMILVMTIMYTKA), serve as a signal peptide directing secretion. Positions 24–43 (EAEAEAEADADADAKAEAEA) are excised as a propeptide.

Belongs to the non-disulfide-bridged peptide (NDBP) superfamily. Medium-length antimicrobial peptide (group 3) family. Ponericin-W subfamily. Expressed by the venom gland.

The protein localises to the secreted. The protein resides in the target cell membrane. May have antimicrobial properties by disrupting the integrity of the bacterial cell membrane. In addition, when tested in vitro on the parasite Trypanosoma cruzi (responsible of the Chagas disease), is able to potently reduce the number of the three forms (epimastigote, trypomastigote and amastigote) by inducing cell death through necrosis. Functionally, may have antimicrobial properties by disrupting the integrity of the bacterial cell membrane. In addition, when tested in vitro on the parasite Trypanosoma cruzi (responsible of the Chagas disease), is able to moderately reduce the number of the forms epimastigote and trypomastigote. Its activity on the amastigote form has not been tested. In terms of biological role, may have antimicrobial properties by disrupting the integrity of the bacterial cell membrane. In addition, when tested in vitro on the parasite Trypanosoma cruzi (responsible of the Chagas disease), shows only a weak reduction of the number of the trypomastigote forms. Has no activity on the epimastigote forms. Its activity on the amastigote form has not been tested. The chain is M-poneratoxin-Dq3a from Dinoponera quadriceps (South American ant).